Here is a 316-residue protein sequence, read N- to C-terminus: METWQELKVTVKREGEELVSNLLIELGAQGVAIEDSLDYVGNVDRFGEIFPEVEQQEEIVVTAYYPDTVDVTVVEADLQARLAELTDFMDLGELKIGTTALAEEDWADNWKKYYEPARITHDLTIVPSWTDYEATAGEKIIKLDPGMAFGTGTHPTTKMSLFALEQVLRGGETVLDVGTGSGVLSIASSLLGAKEIFAYDLDDVAVRVAQENIELNPGMENIHVAAGDLLKGVEIEADVIVANILADILIHLIDDAYRLVKDEGYLIMSGIIKDKWDMVRESAESAGFFLETHMIQGEWNACVFKKTKDISGVIGG.

The S-adenosyl-L-methionine site is built by Thr-157, Gly-178, Asp-200, and Asn-243.

Belongs to the methyltransferase superfamily. PrmA family.

The protein resides in the cytoplasm. The catalysed reaction is L-lysyl-[protein] + 3 S-adenosyl-L-methionine = N(6),N(6),N(6)-trimethyl-L-lysyl-[protein] + 3 S-adenosyl-L-homocysteine + 3 H(+). Methylates ribosomal protein L11. This Streptococcus pneumoniae (strain ATCC 700669 / Spain 23F-1) protein is Ribosomal protein L11 methyltransferase.